The primary structure comprises 283 residues: NAD kinase (283 aa).

D66 functions as the Proton acceptor in the catalytic mechanism. NAD(+) contacts are provided by residues 66–67, R71, 137–138, H165, D167, and 178–183; these read DG, ND, and TGYSMS.

The protein belongs to the NAD kinase family. A divalent metal cation is required as a cofactor.

It is found in the cytoplasm. It carries out the reaction NAD(+) + ATP = ADP + NADP(+) + H(+). Involved in the regulation of the intracellular balance of NAD and NADP, and is a key enzyme in the biosynthesis of NADP. Catalyzes specifically the phosphorylation on 2'-hydroxyl of the adenosine moiety of NAD to yield NADP. In Agathobacter rectalis (strain ATCC 33656 / DSM 3377 / JCM 17463 / KCTC 5835 / VPI 0990) (Eubacterium rectale), this protein is NAD kinase.